Here is a 427-residue protein sequence, read N- to C-terminus: Stemphyloxin II biosynthesis cluster transcription factor sthR (427 aa).

Positions 15–45 form a DNA-binding region, zn(2)-C6 fungal-type; the sequence is CDRCRKQKLRCPPDKDDMGTCGRCLRAGVAC. The disordered stretch occupies residues 51 to 70; that stretch reads KPRGRSQKHGISTDGTSHVS. Polar residues predominate over residues 59–69; that stretch reads HGISTDGTSHV.

The protein resides in the nucleus. Its function is as follows. Transcription factor that regulates the expression of the gene cluster that mediates the biosynthesis of the phytotoxin stemphyloxin II. This is Stemphyloxin II biosynthesis cluster transcription factor sthR from Phaeosphaeria nodorum (strain SN15 / ATCC MYA-4574 / FGSC 10173) (Glume blotch fungus).